A 550-amino-acid chain; its full sequence is CTP synthase (550 aa).

An amidoligase domain region spans residues 1 to 271 (MTRYIFITGG…DAEVLDVFGM (271 aa)). Serine 13 contributes to the CTP binding site. Position 13 (serine 13) interacts with UTP. An ATP-binding site is contributed by 14 to 19 (SLGKGL). Tyrosine 54 provides a ligand contact to L-glutamine. Aspartate 71 is an ATP binding site. Aspartate 71 and glutamate 145 together coordinate Mg(2+). CTP contacts are provided by residues 152-154 (DIE), 192-197 (KTKPTQ), and lysine 228. UTP is bound by residues 192–197 (KTKPTQ) and lysine 228. Positions 297–549 (TIAVVGKYTV…IAAAKEQGRL (253 aa)) constitute a Glutamine amidotransferase type-1 domain. Residue glycine 361 participates in L-glutamine binding. Catalysis depends on cysteine 388, which acts as the Nucleophile; for glutamine hydrolysis. Residues 389-392 (FGMQ), glutamate 412, and arginine 477 each bind L-glutamine. Catalysis depends on residues histidine 522 and glutamate 524.

The protein belongs to the CTP synthase family. In terms of assembly, homotetramer.

The catalysed reaction is UTP + L-glutamine + ATP + H2O = CTP + L-glutamate + ADP + phosphate + 2 H(+). It carries out the reaction L-glutamine + H2O = L-glutamate + NH4(+). It catalyses the reaction UTP + NH4(+) + ATP = CTP + ADP + phosphate + 2 H(+). Its pathway is pyrimidine metabolism; CTP biosynthesis via de novo pathway; CTP from UDP: step 2/2. With respect to regulation, allosterically activated by GTP, when glutamine is the substrate; GTP has no effect on the reaction when ammonia is the substrate. The allosteric effector GTP functions by stabilizing the protein conformation that binds the tetrahedral intermediate(s) formed during glutamine hydrolysis. Inhibited by the product CTP, via allosteric rather than competitive inhibition. In terms of biological role, catalyzes the ATP-dependent amination of UTP to CTP with either L-glutamine or ammonia as the source of nitrogen. Regulates intracellular CTP levels through interactions with the four ribonucleotide triphosphates. This is CTP synthase from Caulobacter sp. (strain K31).